Reading from the N-terminus, the 114-residue chain is DIVMTQSPTFLAVTASKKVTISCTASESLYSSKHKVHYLAWYQKKPEQSPKLLIYGASNRYIGVPDRFTGSGSGTDFTLTISSVQVEDLTHYYCAQFYSYPLTFGAGTKLELKR.

The framework-1 stretch occupies residues 1–23 (DIVMTQSPTFLAVTASKKVTISC). C23 and C94 are oxidised to a cystine. Positions 24–40 (TASESLYSSKHKVHYLA) are complementarity-determining-1. The segment at 41–55 (WYQKKPEQSPKLLIY) is framework-2. Residues 56–62 (GASNRYI) form a complementarity-determining-2 region. The tract at residues 63–94 (GVPDRFTGSGSGTDFTLTISSVQVEDLTHYYC) is framework-3. Residues 95-103 (AQFYSYPLT) form a complementarity-determining-3 region. Residues 104 to 113 (FGAGTKLELK) are framework-4.

Anti-phosphocholine antibody. In Mus musculus (Mouse), this protein is Ig kappa chain V-I region S107A (Igkv7-33).